Here is a 1736-residue protein sequence, read N- to C-terminus: Hybrid signal transduction histidine kinase I (1736 aa).

Positions 143–161 (HNINNNQNNQNSVNINSSN) are enriched in low complexity. The disordered stretch occupies residues 143–171 (HNINNNQNNQNSVNINSSNKGQYNRPEPS). Residues 234 to 286 (FEYPLRINRKNDNLVRYIQLKGEIIKKDDKVFKVLGVCHDFSEIQEAKDKLEE) form the PAC domain. One can recognise a PAS domain in the interval 287 to 358 (ESKFVEALIG…QINLEKSGTP (72 aa)). Residues 378-469 (TSNQQQSSLS…NTTNGIGGAT (92 aa)) form a disordered region. A compositionally biased stretch (low complexity) spans 379–389 (SNQQQSSLSKS). A compositionally biased stretch (polar residues) spans 392 to 412 (PRSQSNCSNGNKSQNRLSKNY). The span at 413 to 469 (STTTTTTNNNNNNNNNNNNNNNNNNNNNSISQQQQTQVSTQQTQQQQNTTNGIGGAT) shows a compositional bias: low complexity. Positions 556-908 (NISHELLSPM…TFHFILSIKS (353 aa)) constitute a Histidine kinase domain. Histidine 559 is subject to Phosphohistidine; by autocatalysis. 7 disordered regions span residues 711–821 (NSKT…KREK), 952–971 (TKKV…TNYG), 1080–1124 (NGNN…KQHS), 1157–1258 (PPKS…ILSP), 1277–1301 (SLTP…INNG), 1330–1393 (ASSP…NLSS), and 1419–1520 (SNNL…PPIL). 2 stretches are compositionally biased toward acidic residues: residues 725–735 (SIDGDYDDQDN) and 758–789 (ELDE…DDDT). 3 stretches are compositionally biased toward low complexity: residues 790–807 (SSNT…FHNN), 961–971 (DNGNNDSTNYG), and 1080–1096 (NGNN…NNNI). Polar residues predominate over residues 1097 to 1117 (QTPNGLNNSRGSSLISTPSTK). 2 stretches are compositionally biased toward low complexity: residues 1186–1195 (SSPPINSSSS) and 1202–1258 (TNGS…ILSP). Residues 1330 to 1339 (ASSPKQSQRG) show a composition bias toward polar residues. Composition is skewed to low complexity over residues 1340–1376 (YSPK…QQQQ), 1425–1475 (NNNN…STPE), 1482–1492 (SPRSNNNNNCS), and 1506–1520 (SSTI…PPIL). The region spanning 1551-1674 (KVLVAEDNTM…LLYEVINTQI (124 aa)) is the Response regulatory domain. A 4-aspartylphosphate modification is found at aspartate 1605. Positions 1695–1722 (NNNNNNTNNNNNNNNSSNPVNNNNSNSI) are enriched in low complexity. Residues 1695 to 1736 (NNNNNNTNNNNNNNNSSNPVNNNNSNSIDATQQELNNEKIRI) are disordered.

Post-translationally, activation probably requires transfer of a phosphate group between a histidine in the kinase core (transmitter) domain and an aspartate of the receiver domain.

The catalysed reaction is ATP + protein L-histidine = ADP + protein N-phospho-L-histidine.. Functionally, acts as a receptor histidine kinase for a signal transduction pathway. This protein undergoes an ATP-dependent autophosphorylation at a conserved histidine residue in the kinase core, and a phosphoryl group is then transferred to a conserved aspartate residue in the receiver domain. This chain is Hybrid signal transduction histidine kinase I (dhkI-1), found in Dictyostelium discoideum (Social amoeba).